Here is a 424-residue protein sequence, read N- to C-terminus: Tubulin gamma chain, nucleomorph (424 aa).

137–143 (NGGTGAG) contacts GTP.

It belongs to the tubulin family.

Its function is as follows. Tubulin is the major constituent of microtubules. The gamma chain is found at microtubule organizing centers (MTOC) such as the spindle poles or the centrosome, suggesting that it is involved in the minus-end nucleation of microtubule assembly. The sequence is that of Tubulin gamma chain, nucleomorph (tubG) from Guillardia theta (Cryptophyte).